Here is a 338-residue protein sequence, read N- to C-terminus: MEQLRAAARLQIVLGHLGRPSAGAVVAHPTSGTISSASFHPQQFQYTLDNNVLTLEQRKFYEENGFLVIKNLVPDADIQRFRNEFEKICRKEVKPLGLTVMRDVTISKSEYAPSEKMITKVQDFQEDKELFRYCTLPEILKYVECFTGPNIMAMHTMLINKPPDSGKKTSRHPLHQDLHYFPFRPSDLIVCAWTAMEHISRNNGCLVVLPGTHKGSLKPHDYPKWEGGVNKMFHGIQDYEENKARVHLVMEKGDTVFFHPLLIHGSGQNKTQGFRKAISCHFASADCHYIDVKGTSQENIEKEVVGIAHKFFGAENSVNLKDIWMFRARLVKGERTNL.

Residues 1-30 (MEQLRAAARLQIVLGHLGRPSAGAVVAHPT) constitute a peroxisome transit peptide. An N6-succinyllysine mark is found at K59 and K108. Residues K120, M157, 175 to 177 (HQD), and W193 contribute to the 2-oxoglutarate site. Fe cation contacts are provided by H175 and D177. N6-succinyllysine occurs at positions 231 and 252. A Fe cation-binding site is contributed by H264. 2-oxoglutarate-binding residues include S266 and R275. S317 is modified (phosphoserine).

The protein belongs to the PhyH family. Interacts with FKBP52. Interacts with PHYHIP. The cofactor is Fe cation. L-ascorbate is required as a cofactor. Requires ATP as cofactor. Mg(2+) serves as cofactor. As to expression, expressed in liver, kidney, and T-cells, but not in spleen, brain, heart, lung and skeletal muscle.

The protein localises to the peroxisome. It catalyses the reaction phytanoyl-CoA + 2-oxoglutarate + O2 = 2-hydroxyphytanoyl-CoA + succinate + CO2. The enzyme catalyses 3-methylhexadecanoyl-CoA + 2-oxoglutarate + O2 = 2-hydroxy-3-methylhexadecanoyl-CoA + succinate + CO2. It carries out the reaction hexadecanoyl-CoA + 2-oxoglutarate + O2 = 2-hydroxyhexadecanoyl-CoA + succinate + CO2. The catalysed reaction is octanoyl-CoA + 2-oxoglutarate + O2 = 2-hydroxyoctanoyl-CoA + succinate + CO2. It catalyses the reaction decanoyl-CoA + 2-oxoglutarate + O2 = 2-hydroxydecanoyl-CoA + succinate + CO2. The enzyme catalyses 3-methylbutanoyl-CoA + 2-oxoglutarate + O2 = 2-hydroxy-3-methylbutanoyl-CoA + succinate + CO2. It carries out the reaction heptadecanoyl-CoA + 2-oxoglutarate + O2 = 2-hydroxyheptadecanoyl-CoA + succinate + CO2. The catalysed reaction is eicosanoyl-CoA + 2-oxoglutarate + O2 = 2-hydroxyeicosanoyl-CoA + succinate + CO2. It catalyses the reaction octadecanoyl-CoA + 2-oxoglutarate + O2 = 2-hydroxyoctadecanoyl-CoA + succinate + CO2. The enzyme catalyses dodecanoyl-CoA + 2-oxoglutarate + O2 = 2-hydroxydodecanoyl-CoA + succinate + CO2. It carries out the reaction tetradecanoyl-CoA + 2-oxoglutarate + O2 = 2-hydroxytetradecanoyl-CoA + succinate + CO2. The catalysed reaction is hexanoyl-CoA + 2-oxoglutarate + O2 = 2-hydroxyhexanoyl-CoA + succinate + CO2. It catalyses the reaction butanoyl-CoA + 2-oxoglutarate + O2 = 2-hydroxybutanoyl-CoA + succinate + CO2. The enzyme catalyses 3-methylnonanoyl-CoA + 2-oxoglutarate + O2 = 2-hydroxy-3-methylnonanoyl-CoA + succinate + CO2. It carries out the reaction 3-methylundecanoyl-CoA + 2-oxoglutarate + O2 = 2-hydroxy-3-methylundecanoyl-CoA + succinate + CO2. The catalysed reaction is 3-methyldodecanoyl-CoA + 2-oxoglutarate + O2 = 2-hydroxy-3-methyldodecanoyl-CoA + succinate + CO2. The protein operates within lipid metabolism; fatty acid metabolism. In terms of biological role, catalyzes the 2-hydroxylation of not only racemic phytanoyl-CoA and the isomers of 3-methylhexadecanoyl-CoA, but also a variety of other mono-branched 3-methylacyl-CoA esters (with a chain length of at least seven carbon atoms) and straight-chain acyl-CoA esters (with a chain length longer than four carbon atoms). Does not hydroxylate long and very long straight chain acyl-CoAs or 2-methyl- and 4-methyl-branched acyl-CoAs. The chain is Phytanoyl-CoA dioxygenase, peroxisomal (PHYH) from Homo sapiens (Human).